The following is a 415-amino-acid chain: Serine hydroxymethyltransferase (415 aa).

Residues Leu-117 and 121–123 (GHL) each bind (6S)-5,6,7,8-tetrahydrofolate. Lys-225 is modified (N6-(pyridoxal phosphate)lysine). Residues Glu-241 and 349–351 (SPF) contribute to the (6S)-5,6,7,8-tetrahydrofolate site.

Belongs to the SHMT family. As to quaternary structure, homodimer. Pyridoxal 5'-phosphate is required as a cofactor.

The protein localises to the cytoplasm. The catalysed reaction is (6R)-5,10-methylene-5,6,7,8-tetrahydrofolate + glycine + H2O = (6S)-5,6,7,8-tetrahydrofolate + L-serine. Its pathway is one-carbon metabolism; tetrahydrofolate interconversion. The protein operates within amino-acid biosynthesis; glycine biosynthesis; glycine from L-serine: step 1/1. In terms of biological role, catalyzes the reversible interconversion of serine and glycine with tetrahydrofolate (THF) serving as the one-carbon carrier. This reaction serves as the major source of one-carbon groups required for the biosynthesis of purines, thymidylate, methionine, and other important biomolecules. Also exhibits THF-independent aldolase activity toward beta-hydroxyamino acids, producing glycine and aldehydes, via a retro-aldol mechanism. In Campylobacter hominis (strain ATCC BAA-381 / DSM 21671 / CCUG 45161 / LMG 19568 / NCTC 13146 / CH001A), this protein is Serine hydroxymethyltransferase.